The primary structure comprises 711 residues: Polyribonucleotide nucleotidyltransferase (711 aa).

Positions 487 and 493 each coordinate Mg(2+). The region spanning 554–613 (PRIHTMKISAEKIKDVIGKGGAVIRALTEETGTTIEIEDDGTIKIAATEGAAAKEAIRRI) is the KH domain. Residues 623 to 691 (GRIYTGKVAR…RQGRVRLSMK (69 aa)) form the S1 motif domain. The segment at 691–711 (KEAVEKPAEEAAAEAPAAKEE) is disordered.

The protein belongs to the polyribonucleotide nucleotidyltransferase family. As to quaternary structure, component of the RNA degradosome, which is a multiprotein complex involved in RNA processing and mRNA degradation. It depends on Mg(2+) as a cofactor.

It localises to the cytoplasm. It catalyses the reaction RNA(n+1) + phosphate = RNA(n) + a ribonucleoside 5'-diphosphate. Involved in mRNA degradation. Catalyzes the phosphorolysis of single-stranded polyribonucleotides processively in the 3'- to 5'-direction. The protein is Polyribonucleotide nucleotidyltransferase of Vibrio parahaemolyticus serotype O3:K6 (strain RIMD 2210633).